Here is a 215-residue protein sequence, read N- to C-terminus: Cytochrome b6 (215 aa).

A helical membrane pass occupies residues 32 to 52; the sequence is IFYCLGGITLTCFLIQVATGF. A heme c-binding site is contributed by Cys-35. Residues His-86 and His-100 each coordinate heme b. 3 consecutive transmembrane segments (helical) span residues 90–110, 116–136, and 186–206; these read ASMM…TGGF, LTWV…VTGY, and LHTF…FLMI. 2 residues coordinate heme b: His-187 and His-202.

The protein belongs to the cytochrome b family. PetB subfamily. In terms of assembly, the 4 large subunits of the cytochrome b6-f complex are cytochrome b6, subunit IV (17 kDa polypeptide, PetD), cytochrome f and the Rieske protein, while the 4 small subunits are PetG, PetL, PetM and PetN. The complex functions as a dimer. Heme b is required as a cofactor. It depends on heme c as a cofactor.

It is found in the plastid. The protein localises to the chloroplast thylakoid membrane. In terms of biological role, component of the cytochrome b6-f complex, which mediates electron transfer between photosystem II (PSII) and photosystem I (PSI), cyclic electron flow around PSI, and state transitions. In Spirogyra maxima (Green alga), this protein is Cytochrome b6.